The primary structure comprises 153 residues: Probable succinate transporter subunit YjjB (153 aa).

Helical transmembrane passes span 7-27 (WALL…AMVF), 51-71 (MIHF…MIGI), 83-103 (VFTV…TAMI), and 125-145 (FLKA…PGLW).

It belongs to the ThrE exporter (TC 2.A.79) family. In terms of assembly, the transporter is composed of YjjB and YjjP.

The protein localises to the cell inner membrane. Its function is as follows. Involved in succinate export with YjjP. Both proteins are required for export. The polypeptide is Probable succinate transporter subunit YjjB (Yersinia pestis bv. Antiqua (strain Antiqua)).